Consider the following 408-residue polypeptide: S-adenosylmethionine synthase (408 aa).

His-15 serves as a coordination point for ATP. Mg(2+) is bound at residue Asp-17. A K(+)-binding site is contributed by Glu-43. L-methionine is bound by residues Glu-56 and Gln-100. Positions 100 to 110 are flexible loop; it reads QSPDIAQGVNE. ATP contacts are provided by residues 171 to 173, 248 to 249, Asp-257, 263 to 264, Ala-280, and Lys-284; these read DGK, KF, and RK. Asp-257 contributes to the L-methionine binding site. Lys-288 is an L-methionine binding site.

Belongs to the AdoMet synthase family. As to quaternary structure, homotetramer; dimer of dimers. Requires Mg(2+) as cofactor. The cofactor is K(+).

The protein resides in the cytoplasm. It catalyses the reaction L-methionine + ATP + H2O = S-adenosyl-L-methionine + phosphate + diphosphate. Its pathway is amino-acid biosynthesis; S-adenosyl-L-methionine biosynthesis; S-adenosyl-L-methionine from L-methionine: step 1/1. Functionally, catalyzes the formation of S-adenosylmethionine (AdoMet) from methionine and ATP. The overall synthetic reaction is composed of two sequential steps, AdoMet formation and the subsequent tripolyphosphate hydrolysis which occurs prior to release of AdoMet from the enzyme. The protein is S-adenosylmethionine synthase of Synechococcus sp. (strain CC9902).